The chain runs to 774 residues: Protein translocase subunit SecA 2 (774 aa).

ATP-binding positions include Q94, 112–116, and D501; that span reads GEGKT.

Belongs to the SecA family. As to quaternary structure, monomer and homodimer. Part of the essential Sec protein translocation apparatus which comprises SecA, SecYEG and auxiliary proteins SecDF. Other proteins may also be involved.

The protein resides in the cell membrane. The protein localises to the cytoplasm. It carries out the reaction ATP + H2O + cellular proteinSide 1 = ADP + phosphate + cellular proteinSide 2.. Part of the Sec protein translocase complex. Interacts with the SecYEG preprotein conducting channel. Has a central role in coupling the hydrolysis of ATP to the transfer of proteins into and across the cell membrane, serving as an ATP-driven molecular motor driving the stepwise translocation of polypeptide chains across the membrane. This is Protein translocase subunit SecA 2 from Mycobacterium sp. (strain JLS).